The following is a 78-amino-acid chain: U7-lycotoxin-Ls1h (78 aa).

The N-terminal stretch at Met1–Ala22 is a signal peptide. A propeptide spanning residues Gln23–Gly26 is cleaved from the precursor.

It belongs to the neurotoxin 19 (CSTX) family. 07 (U7-Lctx) subfamily. Post-translationally, contains 4 disulfide bonds. In terms of tissue distribution, expressed by the venom gland.

It localises to the secreted. This Lycosa singoriensis (Wolf spider) protein is U7-lycotoxin-Ls1h.